Here is a 167-residue protein sequence, read N- to C-terminus: 3-isopropylmalate dehydratase small subunit (167 aa).

The protein belongs to the LeuD family. LeuD type 2 subfamily. In terms of assembly, heterodimer of LeuC and LeuD.

It catalyses the reaction (2R,3S)-3-isopropylmalate = (2S)-2-isopropylmalate. It functions in the pathway amino-acid biosynthesis; L-leucine biosynthesis; L-leucine from 3-methyl-2-oxobutanoate: step 2/4. Catalyzes the isomerization between 2-isopropylmalate and 3-isopropylmalate, via the formation of 2-isopropylmaleate. The sequence is that of 3-isopropylmalate dehydratase small subunit from Wolinella succinogenes (strain ATCC 29543 / DSM 1740 / CCUG 13145 / JCM 31913 / LMG 7466 / NCTC 11488 / FDC 602W) (Vibrio succinogenes).